The chain runs to 315 residues: PDZ domain-containing protein GIPC2 (315 aa).

Basic residues predominate over residues 1–12; the sequence is MPLKLRGKKKAK. Residues 1 to 34 are disordered; sequence MPLKLRGKKKAKSKETAGLVEGEPTGAGGGSLSA. Residues 117–197 form the PDZ domain; the sequence is EVNVYKSEDS…EELFTMKLIE (81 aa).

Belongs to the GIPC family. As to quaternary structure, probably interacts with SEMA5A. As to expression, expressed at highest levels in ascending colon and at moderate levels in adult kidney. Expressed at low levels in adult pancreas and at very low levels in adult liver. Expression is down-regulated in several primary tumors, such as kidney, colon and rectal tumors.

Its subcellular location is the cytoplasm. In Homo sapiens (Human), this protein is PDZ domain-containing protein GIPC2 (GIPC2).